The sequence spans 242 residues: 1-(5-phosphoribosyl)-5-[(5-phosphoribosylamino)methylideneamino] imidazole-4-carboxamide isomerase (242 aa).

Aspartate 10 (proton acceptor) is an active-site residue. Aspartate 132 functions as the Proton donor in the catalytic mechanism.

It belongs to the HisA/HisF family.

It localises to the cytoplasm. It catalyses the reaction 1-(5-phospho-beta-D-ribosyl)-5-[(5-phospho-beta-D-ribosylamino)methylideneamino]imidazole-4-carboxamide = 5-[(5-phospho-1-deoxy-D-ribulos-1-ylimino)methylamino]-1-(5-phospho-beta-D-ribosyl)imidazole-4-carboxamide. It functions in the pathway amino-acid biosynthesis; L-histidine biosynthesis; L-histidine from 5-phospho-alpha-D-ribose 1-diphosphate: step 4/9. The sequence is that of 1-(5-phosphoribosyl)-5-[(5-phosphoribosylamino)methylideneamino] imidazole-4-carboxamide isomerase from Methanothrix thermoacetophila (strain DSM 6194 / JCM 14653 / NBRC 101360 / PT) (Methanosaeta thermophila).